The chain runs to 389 residues: Flap endonuclease 1 (389 aa).

Positions 1 to 110 (MGIKGLMKLL…GELAKRSDRR (110 aa)) are N-domain. Residue Asp-35 participates in Mg(2+) binding. DNA is bound by residues Arg-48 and Arg-76. Asp-92 is a Mg(2+) binding site. The segment at 103-124 (LAKRSDRRQEAQKALEEATEKG) is disordered. Residues 128 to 259 (DIDRFNKRLV…KKAYAGIKEH (132 aa)) form an I-domain region. Positions 164, 166, 185, and 187 each coordinate Mg(2+). Glu-164 is a DNA binding site. The DNA site is built by Gly-237 and Asp-239. Asp-239 lines the Mg(2+) pocket. The interval 350–358 (SQKRLDSFF) is interaction with PCNA. Positions 362–389 (PSANGAKKRKAPAAKGGKKAATAKKGKK) are disordered. Basic residues predominate over residues 367–389 (AKKRKAPAAKGGKKAATAKKGKK).

Belongs to the XPG/RAD2 endonuclease family. FEN1 subfamily. In terms of assembly, interacts with PCNA. Three molecules of FEN1 bind to one PCNA trimer with each molecule binding to one PCNA monomer. PCNA stimulates the nuclease activity without altering cleavage specificity. It depends on Mg(2+) as a cofactor. Phosphorylated. Phosphorylation upon DNA damage induces relocalization to the nuclear plasma.

It localises to the nucleus. Its subcellular location is the nucleolus. It is found in the nucleoplasm. The protein localises to the mitochondrion. Its function is as follows. Structure-specific nuclease with 5'-flap endonuclease and 5'-3' exonuclease activities involved in DNA replication and repair. During DNA replication, cleaves the 5'-overhanging flap structure that is generated by displacement synthesis when DNA polymerase encounters the 5'-end of a downstream Okazaki fragment. It enters the flap from the 5'-end and then tracks to cleave the flap base, leaving a nick for ligation. Also involved in the long patch base excision repair (LP-BER) pathway, by cleaving within the apurinic/apyrimidinic (AP) site-terminated flap. Acts as a genome stabilization factor that prevents flaps from equilibrating into structures that lead to duplications and deletions. Also possesses 5'-3' exonuclease activity on nicked or gapped double-stranded DNA, and exhibits RNase H activity. Also involved in replication and repair of rDNA and in repairing mitochondrial DNA. This chain is Flap endonuclease 1, found in Phytophthora infestans (strain T30-4) (Potato late blight agent).